The sequence spans 70 residues: DNA-directed RNA polymerase subunit omega (70 aa).

It belongs to the RNA polymerase subunit omega family. The RNAP catalytic core consists of 2 alpha, 1 beta, 1 beta' and 1 omega subunit. When a sigma factor is associated with the core the holoenzyme is formed, which can initiate transcription.

It catalyses the reaction RNA(n) + a ribonucleoside 5'-triphosphate = RNA(n+1) + diphosphate. Functionally, promotes RNA polymerase assembly. Latches the N- and C-terminal regions of the beta' subunit thereby facilitating its interaction with the beta and alpha subunits. The sequence is that of DNA-directed RNA polymerase subunit omega from Shouchella clausii (strain KSM-K16) (Alkalihalobacillus clausii).